We begin with the raw amino-acid sequence, 196 residues long: MVAEVQKQAPPFKKTAVVDGIFEEISLEKYKGKYVVLAFVPLAFSFVCPTEIVAFSDAAKKFEDQGAQVLFASTDSEYSLLAWTNLPRKDGGLGPVKVPLLADKNHSLSRDYGVLIEKEGIALRGLFIIDPKGIIRHITINDLSVGRNVNEALRLVEGFQWTDKNGTVLPCNWTPGAATIKPDVKDSKEYFKNANN.

A Thioredoxin domain is found at 3 to 161; it reads AEVQKQAPPF…ALRLVEGFQW (159 aa). Lys14 participates in a covalent cross-link: Glycyl lysine isopeptide (Lys-Gly) (interchain with G-Cter in ubiquitin). The Cysteine sulfenic acid (-SOH) intermediate role is filled by Cys48. Residues Lys89 and Lys132 each participate in a glycyl lysine isopeptide (Lys-Gly) (interchain with G-Cter in ubiquitin) cross-link. Thr174 is subject to Phosphothreonine.

Belongs to the peroxiredoxin family. AhpC/Prx1 subfamily. In terms of assembly, homodimer; disulfide-linked, upon oxidation.

The protein localises to the cytoplasm. The catalysed reaction is a hydroperoxide + [thioredoxin]-dithiol = an alcohol + [thioredoxin]-disulfide + H2O. Thiol-specific peroxidase that catalyzes the reduction of hydrogen peroxide and organic hydroperoxides to water and alcohols, respectively. Plays a role in cell protection against oxidative stress by detoxifying peroxides and as sensor of hydrogen peroxide-mediated signaling events. Can act alternatively as peroxidase and molecular chaperone. Oxidative stress and heat shock exposure cause a reversible shift of the protein structure from low MW species to high MW complexes, triggering a peroxidase-to-chaperone functional switch. The chaperone function of the protein enhances resistance to heat shock. The protein is Peroxiredoxin TSA2 of Saccharomyces cerevisiae (strain ATCC 204508 / S288c) (Baker's yeast).